The primary structure comprises 707 residues: GDNF-inducible zinc finger protein 1 (707 aa).

Residues 31–103 (CDVTVIVDYQ…VYTARVRVKE (73 aa)) enclose the BTB domain. Residues 149–165 (VEASSGPQVSVTPSSKA) show a composition bias toward polar residues. 2 disordered regions span residues 149–221 (VEAS…PKIR) and 243–309 (RRLR…KDGE). Composition is skewed to basic and acidic residues over residues 198 to 213 (PSKK…KDVA), 243 to 278 (RRLR…EPAS), and 287 to 298 (VEREESLQKVEG). 10 consecutive C2H2-type zinc fingers follow at residues 316-338 (FQCT…IKYH), 347-370 (YRCD…RHVH), 376-399 (FPCE…LQVH), 406-428 (HRCG…ERTH), 434-456 (YGCT…LRVH), 462-484 (FVCD…KRCH), 490-512 (FMCE…NRIH), 518-540 (FKCE…IKVH), 546-568 (YCCD…HRIH), and 574-596 (YMCN…TSIH). Phosphoserine is present on Ser-612.

This sequence belongs to the krueppel C2H2-type zinc-finger protein family. As to quaternary structure, interacts with NCL.

The protein resides in the cytoplasm. It is found in the nucleus. Its subcellular location is the nucleoplasm. The protein localises to the nucleolus. Functionally, transcriptional repressor that binds the GZF1 responsive element (GRE) (consensus: 5'-TGCGCN[TG][CA]TATA-3'). May be regulating VSX2/HOX10 expression. This Rattus norvegicus (Rat) protein is GDNF-inducible zinc finger protein 1 (Gzf1).